We begin with the raw amino-acid sequence, 346 residues long: Phosphate acyltransferase (346 aa).

This sequence belongs to the PlsX family. Homodimer. Probably interacts with PlsY.

The protein resides in the cytoplasm. The enzyme catalyses a fatty acyl-[ACP] + phosphate = an acyl phosphate + holo-[ACP]. It participates in lipid metabolism; phospholipid metabolism. Its function is as follows. Catalyzes the reversible formation of acyl-phosphate (acyl-PO(4)) from acyl-[acyl-carrier-protein] (acyl-ACP). This enzyme utilizes acyl-ACP as fatty acyl donor, but not acyl-CoA. The protein is Phosphate acyltransferase of Brucella melitensis biotype 2 (strain ATCC 23457).